Here is a 7031-residue protein sequence, read N- to C-terminus: Extracellular matrix-binding protein EbhB (7031 aa).

The N-terminal stretch at 1–39 (MNYRDKIQKFSIRKYTVGTFSTVIATLVFLGFNTSQAHA) is a signal peptide. Residues 41–59 (ETNQPASVVKQKQQSNNEQ) show a composition bias toward polar residues. Disordered regions lie at residues 41–86 (ETNQ…HENE), 99–152 (KVAQ…GNDN), 250–277 (PQRQQTSRRSNRIQTRSVESRAAEPRSV), 1342–1373 (NNITGNEKSQAEAGGRPNFRTTGYSQSNATTD), and 2418–2438 (TITPKAGTGHSVSSNPSTLTA). The segment covering 65–80 (SQVQNSQNSQNGQSLS) has biased composition (low complexity). Positions 99-117 (KVAQSSTTNDEQPASQNVN) are enriched in polar residues. The segment covering 130 to 140 (PDKEQSKHKQN) has biased composition (basic and acidic residues). Composition is skewed to polar residues over residues 141 to 151 (ESQSANKNGND), 250 to 266 (PQRQQTSRRSNRIQTRS), 1360 to 1373 (FRTTGYSQSNATTD), and 2427 to 2438 (HSVSSNPSTLTA). 38 consecutive FIVAR domains span residues 2524-2580 (AKNH…VSDA), 2610-2666 (SKNN…ISDE), 2687-2750 (DTHA…VQSA), 2780-2836 (AKTK…IAAE), 2864-2919 (AKTQ…IRQN), 2947-3002 (AKNQ…INTN), 3030-3085 (AKTQ…INDK), 3154-3212 (AMTK…VNQK), 3280-3339 (AMTG…VNNA), 3407-3465 (AMGN…VNRA), 3533-3591 (AMGN…VTEA), 3659-3717 (AMNT…ITQK), 3785-3843 (AMAS…VEAA), 3911-3969 (AMGN…VEQA), 4037-4095 (AMGT…VTAA), 4163-4221 (AMKG…ITQA), 4289-4347 (QMGN…VEAA), 4415-4473 (AMAN…VENA), 4541-4599 (AMGT…INQI), 4667-4725 (AMGQ…VDRA), 4793-4851 (AMNS…VDNA), 4919-4977 (AMGA…INGM), 5045-5103 (AMTA…VNSA), 5171-5229 (AMKG…ITQV), 5297-5355 (AMHS…VEQA), 5423-5481 (AMGQ…VERA), 5549-5607 (AMTA…VTNA), 5675-5733 (AMKG…INQA), 5801-5859 (AMTN…VETA), 5927-5985 (AMSN…VEQA), 6053-6111 (AMNQ…INQK), 6179-6236 (AMGN…VQAA), 6304-6362 (AMGQ…VEAA), 6430-6488 (AMQR…VEQA), 6556-6614 (AMDQ…VTAA), 6682-6740 (AMNQ…VTQA), 6818-6866 (DKDQ…VEAA), and 6934-6992 (AMGN…VEAA).

The polypeptide is Extracellular matrix-binding protein EbhB (ebhB) (Staphylococcus aureus (strain Newman)).